Consider the following 27-residue polypeptide: Secretin (27 aa).

Valine amide is present on V27.

Belongs to the glucagon family.

It localises to the secreted. Hormone involved in different processes, such as regulation of the pH of the duodenal content, food intake and water homeostasis. Exerts its biological effects by binding to secretin receptor (SCTR), a G-protein coupled receptor expressed in the basolateral domain of several cells. Acts as a key gastrointestinal hormone by regulating the pH of the duodenal content. Secreted by S cells of the duodenum in the crypts of Lieberkuehn and regulates the pH of the duodenum by (1) inhibiting the secretion of gastric acid from the parietal cells of the stomach and (2) stimulating the production of bicarbonate (NaHCO(3)) from the ductal cells of the pancreas. Production of bicarbonate is essential to neutralize the pH and ensure no damage is done to the small intestine by the gastric acid. In addition to regulating the pH of the duodenal content, plays a central role in diet induced thermogenesis: acts as a non-sympathetic brown fat (BAT) activator mediating prandial thermogenesis, which consequentially induces satiation. Mechanistically, secretin released by the gut after a meal binds to secretin receptor (SCTR) in brown adipocytes, activating brown fat thermogenesis by stimulating lipolysis, which is sensed in the brain and promotes satiation. Also able to stimulate lipolysis in white adipocytes. Also plays an important role in cellular osmoregulation: released into the systemic circulation in response to hyperosmolality and acts at different levels in the hypothalamus, pituitary and kidney to regulate water homeostasis. Also plays a role in the central nervous system, possibly by acting as a neuropeptide hormone: required for hippocampal synaptic function and neural progenitor cells maintenance. The protein is Secretin of Canis lupus familiaris (Dog).